The chain runs to 318 residues: Porphobilinogen deaminase (318 aa).

Cys-241 is subject to S-(dipyrrolylmethanemethyl)cysteine.

It belongs to the HMBS family. As to quaternary structure, monomer. Dipyrromethane is required as a cofactor.

The catalysed reaction is 4 porphobilinogen + H2O = hydroxymethylbilane + 4 NH4(+). It participates in porphyrin-containing compound metabolism; protoporphyrin-IX biosynthesis; coproporphyrinogen-III from 5-aminolevulinate: step 2/4. Its function is as follows. Tetrapolymerization of the monopyrrole PBG into the hydroxymethylbilane pre-uroporphyrinogen in several discrete steps. This is Porphobilinogen deaminase from Citrifermentans bemidjiense (strain ATCC BAA-1014 / DSM 16622 / JCM 12645 / Bem) (Geobacter bemidjiensis).